The following is a 750-amino-acid chain: Methylmalonyl-CoA mutase, mitochondrial (750 aa).

The transit peptide at 1-32 directs the protein to the mitochondrion; it reads MLRAKNQLFLLSPHYLRQVKESSGSRLIQQRL. Gln50 is a binding site for malonyl-CoA. An N6-acetyllysine modification is found at Lys89. Malonyl-CoA contacts are provided by residues 96 to 99 and 106 to 110; these read YPTM and TIRQY. N6-acetyllysine is present on Lys212. Malonyl-CoA contacts are provided by residues 216–218, Arg228, Lys255, His265, and 304–306; these read TIQ and RLS. Lys335 is modified (N6-acetyllysine). At Lys343 the chain carries N6-succinyllysine. Ser481 carries the phosphoserine modification. N6-succinyllysine is present on Lys595. Position 602 is an N6-acetyllysine (Lys602). Positions 614–746 constitute a B12-binding domain; sequence RPRLLVAKMG…DDIEKCLEKK (133 aa). An adenosylcob(III)alamin-binding site is contributed by His627.

It belongs to the methylmalonyl-CoA mutase family. Homodimer. Interacts (the apoenzyme form) with MMAA; the interaction is GTP dependent. Requires adenosylcob(III)alamin as cofactor.

Its subcellular location is the mitochondrion matrix. The protein localises to the mitochondrion. It localises to the cytoplasm. The catalysed reaction is (R)-methylmalonyl-CoA = succinyl-CoA. With respect to regulation, inhibited by itaconyl-CoA, a metabolite that inactivates the coenzyme B12 cofactor. In terms of biological role, catalyzes the reversible isomerization of methylmalonyl-CoA (MMCoA) (generated from branched-chain amino acid metabolism and degradation of dietary odd chain fatty acids and cholesterol) to succinyl-CoA (3-carboxypropionyl-CoA), a key intermediate of the tricarboxylic acid cycle. The chain is Methylmalonyl-CoA mutase, mitochondrial (MMUT) from Bos taurus (Bovine).